The primary structure comprises 257 residues: Small ribosomal subunit protein uS3 (257 aa).

The region spanning 39–112 (IRKFLNKKYN…EIVFNVVEVR (74 aa)) is the KH type-2 domain. A disordered region spans residues 217–257 (HEELRKERQSSASSNHGGGKRRPSRKGPRRSQEDAATEGGN). Positions 234 to 245 (GGKRRPSRKGPR) are enriched in basic residues.

This sequence belongs to the universal ribosomal protein uS3 family. In terms of assembly, part of the 30S ribosomal subunit. Forms a tight complex with proteins S10 and S14.

In terms of biological role, binds the lower part of the 30S subunit head. Binds mRNA in the 70S ribosome, positioning it for translation. This is Small ribosomal subunit protein uS3 from Haploplasma axanthum (Acholeplasma axanthum).